The following is a 398-amino-acid chain: Flavohemoprotein (398 aa).

The Globin domain maps to 9 to 147; that stretch reads QLTPAQIKII…LAKLLIDLEA (139 aa). Position 93 (His93) interacts with heme b. Active-site charge relay system residues include Tyr103 and Glu146. The interval 155–398 is reductase; sequence WRWFKDFKVT…KLEYFGPYDP (244 aa). The 108-residue stretch at 156-263 folds into the FAD-binding FR-type domain; it reads RWFKDFKVTR…APPAGNFVYD (108 aa). FAD contacts are provided by residues Tyr196 and 212–215; that span reads REYS. 276–281 is a binding site for NADP(+); that stretch reads GIGITP. 395–398 contributes to the FAD binding site; it reads PYDP.

Belongs to the globin family. Requires FAD as cofactor. Heme b is required as a cofactor.

It is found in the cytoplasm. The catalysed reaction is 2 nitric oxide + NADPH + 2 O2 = 2 nitrate + NADP(+) + H(+). It catalyses the reaction 2 nitric oxide + NADH + 2 O2 = 2 nitrate + NAD(+) + H(+). Its activity is regulated as follows. Inhibited by imidazoles. Functionally, nitric oxide dioxygenase involved in NO detoxification in an aerobic process, termed nitric oxide dioxygenase (NOD) reaction that utilizes O(2) and NAD(P)H to convert NO to nitrate, which protects the fungus from various noxious nitrogen compounds. Therefore, plays a central role in the inducible response to nitrosative stress. Plays a role in virulence since nitric oxide is generated by macrophages of the host immune system. The protein is Flavohemoprotein (YHB1) of Candida albicans (strain SC5314 / ATCC MYA-2876) (Yeast).